The chain runs to 378 residues: Endopolygalacturonase I (378 aa).

The first 20 residues, Met-1–Ala-20, serve as a signal peptide directing secretion. Residues Ser-21 to Arg-39 constitute a propeptide that is removed on maturation. A disulfide bond links Cys-43 and Cys-61. O-linked (Man...) threonine glycosylation occurs at Thr-44. Residues Ser-46, Ser-48, Ser-52, Ser-53, Ser-55, Ser-57, and Ser-62 are each glycosylated (O-linked (Man...) serine). Thr-63 is a glycosylation site (O-linked (Man...) threonine). O-linked (Man...) serine glycosylation occurs at Ser-73. 5 PbH1 repeats span residues Ser-174–Thr-204, Ser-205–Ser-226, Gly-227–Ser-247, Val-256–Thr-277, and Val-285–Gln-307. Catalysis depends on Asp-219, which acts as the Proton donor. The cysteines at positions 221 and 237 are disulfide-linked. His-241 is a catalytic residue. Asn-258 carries an N-linked (GlcNAc...) asparagine glycan. Disulfide bonds link Cys-345-Cys-350 and Cys-369-Cys-378.

It belongs to the glycosyl hydrolase 28 family.

It is found in the secreted. It carries out the reaction (1,4-alpha-D-galacturonosyl)n+m + H2O = (1,4-alpha-D-galacturonosyl)n + (1,4-alpha-D-galacturonosyl)m.. In terms of biological role, involved in maceration and soft-rotting of plant tissue. Hydrolyzes the 1,4-alpha glycosidic bonds of de-esterified pectate in the smooth region of the plant cell wall. In Aspergillus aculeatus, this protein is Endopolygalacturonase I (pgaI).